A 120-amino-acid chain; its full sequence is Large ribosomal subunit protein uL18 (120 aa).

Positions 1–10 are enriched in basic and acidic residues; it reads MSTPRKEQTQ. The interval 1–25 is disordered; that stretch reads MSTPRKEQTQKRHRRLRRHLEGTPE.

It belongs to the universal ribosomal protein uL18 family. In terms of assembly, part of the 50S ribosomal subunit; part of the 5S rRNA/L5/L18/L25 subcomplex. Contacts the 5S and 23S rRNAs.

Its function is as follows. This is one of the proteins that bind and probably mediate the attachment of the 5S RNA into the large ribosomal subunit, where it forms part of the central protuberance. The sequence is that of Large ribosomal subunit protein uL18 from Synechococcus sp. (strain RCC307).